The following is a 404-amino-acid chain: SL1278 acyltransferase Chp1 (404 aa).

Residues 1–42 lie on the Periplasmic side of the membrane; sequence MKCPGVSDCVATVRHDNVFAIAAGLRWSAAVPPLHKGDAVTK. The helical transmembrane segment at 43–63 threads the bilayer; that stretch reads LLVGAIAGGMLACAAILGDGI. Over 64-404 the chain is Cytoplasmic; that stretch reads ASADTALIVP…RGLLPKGKKH (341 aa). Positions 104-325 constitute a PE-PPE domain; the sequence is PTATRHVVSY…LRPIIDRAYQ (222 aa).

It belongs to the mycobacterial PPE family.

It is found in the cell inner membrane. The catalysed reaction is 3 3'-(hydroxy)phthioceranyl-2'-palmitoyl(stearoyl)-2-O-sulfo-alpha,alpha-trehalose = 3,6,6'-tris-(hydroxy)phthioceranyl-2-palmitoyl(stearoyl)-2'-sulfo-alpha-alpha-trehalose + 2 2'-palmitoyl/stearoyl-2-O-sulfo-alpha,alpha-trehalose.. Its activity is regulated as follows. Activity is potentiated by the SL-1 transporter MmpL8. Inhibited by the lipase inhibitor tetrahydrolipstatin (THL). Involved in the final steps of the cell wall sulfolipid-1 (SL-1) biosynthesis. Catalyzes two successive acylations of the precursor 2-palmitoyl-3-(C43)-phthioceranyl-alpha, alpha'-D-trehalose-2'-sulfate (SL1278) to yield the tetraacylated sulfolipid SL-1. The protein is SL1278 acyltransferase Chp1 of Mycobacterium tuberculosis (strain ATCC 25618 / H37Rv).